The primary structure comprises 121 residues: Histone H2B.6 (121 aa).

Positions 1–28 (MAPKAEKKPKVEKRVPGKEGETSKKKAK) are disordered. N6-acetyllysine is present on residues K7 and K13.

The protein belongs to the histone H2B family. In terms of assembly, the nucleosome is a histone octamer containing two molecules each of H2A, H2B, H3 and H4 assembled in one H3-H4 heterotetramer and two H2A-H2B heterodimers. The octamer wraps approximately 147 bp of DNA. Can be acetylated to form H2BK6ac and H2BK33ac. As to expression, expressed preferentially in meristematic tissues.

Its subcellular location is the nucleus. It is found in the chromosome. Functionally, core component of nucleosome. Nucleosomes wrap and compact DNA into chromatin, limiting DNA accessibility to the cellular machineries which require DNA as a template. Histones thereby play a central role in transcription regulation, DNA repair, DNA replication and chromosomal stability. DNA accessibility is regulated via a complex set of post-translational modifications of histones, also called histone code, and nucleosome remodeling. The protein is Histone H2B.6 (TH123) of Triticum aestivum (Wheat).